The following is a 326-amino-acid chain: Phospho-N-acetylmuramoyl-pentapeptide-transferase (326 aa).

9 helical membrane passes run 3 to 23 (ISISAGIVTFLLTLVGIPAFI), 51 to 71 (TMGGLIFLIAAVVVSFLVALF), 79 to 99 (VGMILFILVLYGLVGFLDDFL), 115 to 135 (LALQLLGGVIFYLFYERGGDM), 138 to 158 (IFGYQVHLGIFYIVFALFWLV), 169 to 189 (GIDGLASISVVISLSAYGVIA), 195 to 215 (MDILLVILAMIGGLLGFFVFN), 221 to 243 (VFMGDVGSLALGGMLAAISMALH), and 304 to 324 (VDFFFWGVGLLASLLTLAILY).

This sequence belongs to the glycosyltransferase 4 family. MraY subfamily. Mg(2+) is required as a cofactor.

It localises to the cell membrane. It carries out the reaction UDP-N-acetyl-alpha-D-muramoyl-L-alanyl-gamma-D-glutamyl-L-lysyl-D-alanyl-D-alanine + di-trans,octa-cis-undecaprenyl phosphate = Mur2Ac(oyl-L-Ala-gamma-D-Glu-L-Lys-D-Ala-D-Ala)-di-trans,octa-cis-undecaprenyl diphosphate + UMP. The protein operates within cell wall biogenesis; peptidoglycan biosynthesis. Functionally, catalyzes the initial step of the lipid cycle reactions in the biosynthesis of the cell wall peptidoglycan: transfers peptidoglycan precursor phospho-MurNAc-pentapeptide from UDP-MurNAc-pentapeptide onto the lipid carrier undecaprenyl phosphate, yielding undecaprenyl-pyrophosphoryl-MurNAc-pentapeptide, known as lipid I. The protein is Phospho-N-acetylmuramoyl-pentapeptide-transferase of Streptococcus pneumoniae (strain Hungary19A-6).